Reading from the N-terminus, the 235-residue chain is (5-formylfuran-3-yl)methyl phosphate synthase (235 aa).

K27 acts as the Schiff-base intermediate with substrate in catalysis. K85 serves as the catalytic Proton acceptor.

Belongs to the MfnB family.

The enzyme catalyses 2 D-glyceraldehyde 3-phosphate = 4-(hydroxymethyl)-2-furancarboxaldehyde phosphate + phosphate + 2 H2O. The protein operates within cofactor biosynthesis; methanofuran biosynthesis. Functionally, catalyzes the formation of 4-(hydroxymethyl)-2-furancarboxaldehyde phosphate (4-HFC-P) from two molecules of glyceraldehyde-3-P (GA-3-P). In Methanococcus aeolicus (strain ATCC BAA-1280 / DSM 17508 / OCM 812 / Nankai-3), this protein is (5-formylfuran-3-yl)methyl phosphate synthase.